A 353-amino-acid chain; its full sequence is Major outer membrane protein (353 aa).

An N-terminal signal peptide occupies residues 1-20; that stretch reads MKKTIVALAVAAVAATSANA.

Disulfide bond interactions within and between MOMP molecules and other components form high molecular-weight oligomers.

The protein localises to the cell outer membrane. Its function is as follows. Structural rigidity of the outer membrane of elementary bodies and porin forming, permitting diffusion of solutes through the intracellular reticulate body membrane. The chain is Major outer membrane protein (ompH) from Pasteurella multocida.